Reading from the N-terminus, the 430-residue chain is Asparagine--tRNA ligase (430 aa).

The protein belongs to the class-II aminoacyl-tRNA synthetase family. As to quaternary structure, homodimer.

The protein resides in the cytoplasm. The enzyme catalyses tRNA(Asn) + L-asparagine + ATP = L-asparaginyl-tRNA(Asn) + AMP + diphosphate + H(+). This chain is Asparagine--tRNA ligase, found in Geobacillus thermodenitrificans (strain NG80-2).